The chain runs to 485 residues: Glycogen synthase (485 aa).

K15 provides a ligand contact to ADP-alpha-D-glucose.

This sequence belongs to the glycosyltransferase 1 family. Bacterial/plant glycogen synthase subfamily.

It catalyses the reaction [(1-&gt;4)-alpha-D-glucosyl](n) + ADP-alpha-D-glucose = [(1-&gt;4)-alpha-D-glucosyl](n+1) + ADP + H(+). The protein operates within glycan biosynthesis; glycogen biosynthesis. Synthesizes alpha-1,4-glucan chains using ADP-glucose. This is Glycogen synthase from Francisella philomiragia subsp. philomiragia (strain ATCC 25017 / CCUG 19701 / FSC 153 / O#319-036).